A 129-amino-acid chain; its full sequence is NADH-quinone oxidoreductase subunit A (129 aa).

The next 3 helical transmembrane spans lie at 9–29 (FPIGVVLLVAVVLAFTMLGLA), 68–88 (LLFIVFDIEAIFLYPWAVLLL), and 97–117 (LGWPGFISMGIFVFTLVAGLV).

Belongs to the complex I subunit 3 family. NDH-1 is composed of 14 different subunits. Subunits NuoA, H, J, K, L, M, N constitute the membrane sector of the complex.

It is found in the cell inner membrane. The catalysed reaction is a quinone + NADH + 5 H(+)(in) = a quinol + NAD(+) + 4 H(+)(out). NDH-1 shuttles electrons from NADH, via FMN and iron-sulfur (Fe-S) centers, to quinones in the respiratory chain. The immediate electron acceptor for the enzyme in this species is believed to be ubiquinone. Couples the redox reaction to proton translocation (for every two electrons transferred, four hydrogen ions are translocated across the cytoplasmic membrane), and thus conserves the redox energy in a proton gradient. This is NADH-quinone oxidoreductase subunit A from Anaeromyxobacter dehalogenans (strain 2CP-C).